We begin with the raw amino-acid sequence, 544 residues long: Chaperonin GroEL 2 (544 aa).

Residues 30-33 (TLGP), 87-91 (DGTTT), G415, 480-482 (NAA), and D496 each bind ATP.

This sequence belongs to the chaperonin (HSP60) family. In terms of assembly, forms a cylinder of 14 subunits composed of two heptameric rings stacked back-to-back. Interacts with the co-chaperonin GroES.

The protein localises to the cytoplasm. The catalysed reaction is ATP + H2O + a folded polypeptide = ADP + phosphate + an unfolded polypeptide.. In terms of biological role, together with its co-chaperonin GroES, plays an essential role in assisting protein folding. The GroEL-GroES system forms a nano-cage that allows encapsulation of the non-native substrate proteins and provides a physical environment optimized to promote and accelerate protein folding. This Albidiferax ferrireducens (strain ATCC BAA-621 / DSM 15236 / T118) (Rhodoferax ferrireducens) protein is Chaperonin GroEL 2.